We begin with the raw amino-acid sequence, 277 residues long: MAVKGFKPTTPSRRHMTVNTFEEITTDIPEKSLLVALKRSGGRNAHGKITVRHIGGGAKRKYRIIDFKRNKDGIPAKVSTIEYDPNRSAFIALVTYADGEKRYIIAPVGLKVGDVIVSGADSDIKVGNCLPIVNIPVGTTIHNIELQAGKGAQLVRSAGTSAQLMAKEGKYATLRLPSGEVRYVRIECRATIGTVSNLTHEIINIGKAGRKRHMGIRPTVRGSVMNPNDHPHGGGEGKSPVGHPGPLTPWGKPALGLKTRKNKKYSDKFIIKRKNKK.

Positions 222-277 are disordered; that stretch reads GSVMNPNDHPHGGGEGKSPVGHPGPLTPWGKPALGLKTRKNKKYSDKFIIKRKNKK.

It belongs to the universal ribosomal protein uL2 family. Part of the 50S ribosomal subunit. Forms a bridge to the 30S subunit in the 70S ribosome.

Functionally, one of the primary rRNA binding proteins. Required for association of the 30S and 50S subunits to form the 70S ribosome, for tRNA binding and peptide bond formation. It has been suggested to have peptidyltransferase activity; this is somewhat controversial. Makes several contacts with the 16S rRNA in the 70S ribosome. The sequence is that of Large ribosomal subunit protein uL2 from Clostridium kluyveri (strain NBRC 12016).